The sequence spans 1558 residues: Calmodulin-regulated spectrin-associated protein 1-B (1558 aa).

The region spanning 231–346 (WYWKLVPVRY…FIAELFWWFE (116 aa)) is the Calponin-homology (CH) domain. Composition is skewed to polar residues over residues 400–417 (VQNSPEVCNSNKGSSGFS), 440–450 (ACRNRSNSLTQ), and 504–516 (ASTVTPKHQSHPG). 7 disordered regions span residues 400 to 464 (VQNS…SDKR), 504 to 523 (ASTVTPKHQSHPGQGSVRRI), 551 to 585 (NDITLTNSEDTERQGVTPGAKSIWGRQEDASSDSR), 602 to 675 (AKEK…APGQ), 737 to 790 (TKEL…VASG), 803 to 850 (QRFG…QNKD), and 943 to 968 (DRSKEAEEPEKASCEWAGGGTVSSSP). A compositionally biased stretch (basic and acidic residues) spans 602–620 (AKEKSISLNKEEESGEGRQ). The span at 643–658 (QTLNRTFTPNTSSEFE) shows a compositional bias: polar residues. Over residues 737 to 772 (TKELHPDKKQHFEEEVESAKLREDMNVKEHEDKDGG) the composition is skewed to basic and acidic residues. Low complexity-rich tracts occupy residues 776 to 790 (SSPGQQSQVSSVASG) and 812 to 822 (RSSTSSSQRTT). Residues 849-887 (KDNANMLASELVQLHMQLEEKRRAIESQKKKMEILTARQ) adopt a coiled-coil conformation. Residues 943 to 955 (DRSKEAEEPEKAS) are compositionally biased toward basic and acidic residues. A coiled-coil region spans residues 971–1004 (VEEEVDLNECNRSIELLNEAIGSIQQQMMQLSLQ). 4 disordered regions span residues 1041-1131 (FVEP…TFHL), 1257-1293 (LRKQQLEAESEQKRDETRRKAEEERIRKEEEKARREL), 1305-1344 (ELCEEQEQPQPKPKTKPKKQRLKSVVKEEPSIDPLPKCPA), and 1360-1414 (LASV…ITST). Over residues 1080–1090 (SSTPTPTDSPS) the composition is skewed to low complexity. Residues 1106–1115 (DFVQSSVRSE) show a composition bias toward polar residues. Residues 1243-1303 (AFLLKQQRKA…IKQEYLRKKQ (61 aa)) adopt a coiled-coil conformation. Residues 1317-1328 (PKTKPKKQRLKS) show a composition bias toward basic residues. The 135-residue stretch at 1421-1555 (GPKLFKEPSA…QAKRPAGPKK (135 aa)) folds into the CKK domain.

This sequence belongs to the CAMSAP1 family.

It is found in the cytoplasm. The protein resides in the cytoskeleton. In terms of biological role, key microtubule-organizing protein that specifically binds the minus-end of non-centrosomal microtubules and regulates their dynamics and organization. Specifically recognizes growing microtubule minus-ends and stabilizes microtubules. Acts on free microtubule minus-ends that are not capped by microtubule-nucleating proteins or other factors and protects microtubule minus-ends from depolymerization. In contrast to camsap2 and camsap3, tracks along the growing tips of minus-end microtubules without significantly affecting the polymerization rate: binds at the very tip of the microtubules minus-end and acts as a minus-end tracking protein (-TIP) that dissociates from microtubules after allowing tubulin incorporation. Through interaction with spectrin may regulate neurite outgrowth. In Danio rerio (Zebrafish), this protein is Calmodulin-regulated spectrin-associated protein 1-B (camsap1b).